Reading from the N-terminus, the 332-residue chain is UDP-N-acetylenolpyruvoylglucosamine reductase (332 aa).

In terms of domain architecture, FAD-binding PCMH-type spans 15-184; that stretch reads IDVSAACFLE…TYVSFRLSKR (170 aa). The active site involves arginine 160. The active-site Proton donor is serine 232. Glutamate 328 is a catalytic residue.

Belongs to the MurB family. Requires FAD as cofactor.

It localises to the cytoplasm. It carries out the reaction UDP-N-acetyl-alpha-D-muramate + NADP(+) = UDP-N-acetyl-3-O-(1-carboxyvinyl)-alpha-D-glucosamine + NADPH + H(+). The protein operates within cell wall biogenesis; peptidoglycan biosynthesis. Functionally, cell wall formation. This chain is UDP-N-acetylenolpyruvoylglucosamine reductase, found in Bacteroides fragilis (strain ATCC 25285 / DSM 2151 / CCUG 4856 / JCM 11019 / LMG 10263 / NCTC 9343 / Onslow / VPI 2553 / EN-2).